Consider the following 271-residue polypeptide: Thymidine kinase (271 aa).

ATP contacts are provided by residues 74–81 (GPMFAGKT) and 152–155 (DEAQ). Glu153 (proton acceptor) is an active-site residue. Tyr184 is a substrate binding site. Positions 209 and 212 each coordinate Zn(2+). Tyr237 contacts substrate. Residue Cys241 participates in Zn(2+) binding.

Belongs to the thymidine kinase family.

It catalyses the reaction thymidine + ATP = dTMP + ADP + H(+). This Oryza sativa subsp. japonica (Rice) protein is Thymidine kinase (TK).